A 295-amino-acid chain; its full sequence is Regucalcin (295 aa).

Glu18 contributes to the a divalent metal cation binding site. Arg100, Asn102, and Asp120 together coordinate substrate. Asn150 and Asp200 together coordinate a divalent metal cation. The active-site Proton donor/acceptor is Asp200.

Belongs to the SMP-30/CGR1 family. Zn(2+) is required as a cofactor. The cofactor is Mn(2+). Ca(2+) serves as cofactor. Requires Mg(2+) as cofactor.

Its subcellular location is the cytoplasm. The catalysed reaction is D-glucono-1,5-lactone + H2O = D-gluconate + H(+). Its pathway is cofactor biosynthesis; L-ascorbate biosynthesis via UDP-alpha-D-glucuronate pathway; L-ascorbate from UDP-alpha-D-glucuronate: step 3/4. Gluconolactonase with low activity towards other sugar lactones, including gulonolactone and galactonolactone. Catalyzes a key step in ascorbic acid (vitamin C) biosynthesis. Can also hydrolyze diisopropyl phosphorofluoridate and phenylacetate (in vitro). Calcium-binding protein. Modulates Ca(2+) signaling, and Ca(2+)-dependent cellular processes and enzyme activities. This chain is Regucalcin, found in Danio rerio (Zebrafish).